A 71-amino-acid polypeptide reads, in one-letter code: uncharacterized protein (71 aa).

A helical transmembrane segment spans residues 2-24 (IIAIVAVVIFLLNFLTPYGYMPM). A disordered region spans residues 48-71 (PAESSSNGGSMITKPSTGACQGGR). The span at 49–71 (AESSSNGGSMITKPSTGACQGGR) shows a compositional bias: polar residues.

It is found in the membrane. This is an uncharacterized protein from Archaeoglobus fulgidus (strain ATCC 49558 / DSM 4304 / JCM 9628 / NBRC 100126 / VC-16).